A 94-amino-acid polypeptide reads, in one-letter code: HssA/B-like protein 49 (94 aa).

The interval 1 to 20 (MTLFSSISSISNPMTSSKSS) is disordered.

It belongs to the hssA/B family.

This is HssA/B-like protein 49 (hssl49) from Dictyostelium discoideum (Social amoeba).